A 150-amino-acid polypeptide reads, in one-letter code: uncharacterized protein (150 aa).

A helical membrane pass occupies residues 19 to 39 (SLGMCVILIDGLIVLTAAFVF).

This sequence to B.subtilis YpjC, YqfU and YitT.

The protein resides in the cell membrane. This is an uncharacterized protein from Bacillus sp. (strain PS3).